Here is a 432-residue protein sequence, read N- to C-terminus: MSKIVKVLGREIIDSRGNPTVEAEVHLESGFVGMAAAPSGASTGSREALELRDGDKARFLGKGVLKAVAAVNGPIAEALIGKDAKNQAEIDQIMIDLDGTDNKANFGANAILAVSLANAKAAAAAKSMPLYAHIAELNGTPGVFSMPLPMMNIINGGEHADNNVDIQEFMIQPVGAKTLKEGLRIGAEVFHNLAKVLKSKGYSTAVGDEGGFAPNLKSNAEALEVIAEAVAAAGYELGKDVTLAMDCAASEFFDKEAGIYNMKGEGKTFTSEEFNHYLAELANQFPIVSIEDGLDESDWAGFKHQTELLGDKLQLVGDDLFVTNTKILAEGIEKGVANSILIKFNQIGSLTETLAAIKMAKDAGYTAVISHRSGETEDATIADLAVGTAAGQIKTGSMSRSDRVAKYNQLIRIEEALGEKAPFNGLKEVKGQ.

Gln167 contributes to the (2R)-2-phosphoglycerate binding site. Glu209 functions as the Proton donor in the catalytic mechanism. 3 residues coordinate Mg(2+): Asp246, Glu291, and Asp318. The (2R)-2-phosphoglycerate site is built by Lys343, Arg372, Ser373, and Lys394. Lys343 (proton acceptor) is an active-site residue.

It belongs to the enolase family. In terms of assembly, component of the RNA degradosome, a multiprotein complex involved in RNA processing and mRNA degradation. Mg(2+) is required as a cofactor.

It localises to the cytoplasm. Its subcellular location is the secreted. The protein resides in the cell surface. The catalysed reaction is (2R)-2-phosphoglycerate = phosphoenolpyruvate + H2O. Its pathway is carbohydrate degradation; glycolysis; pyruvate from D-glyceraldehyde 3-phosphate: step 4/5. Its function is as follows. Catalyzes the reversible conversion of 2-phosphoglycerate (2-PG) into phosphoenolpyruvate (PEP). It is essential for the degradation of carbohydrates via glycolysis. The polypeptide is Enolase (Aliivibrio fischeri (strain MJ11) (Vibrio fischeri)).